The following is a 233-amino-acid chain: Biosynthetic peptidoglycan transglycosylase (233 aa).

Residues 8 to 28 form a helical membrane-spanning segment; the sequence is LIALPVGIFIFFNAYVYGNII.

The protein belongs to the glycosyltransferase 51 family.

The protein localises to the cell inner membrane. The catalysed reaction is [GlcNAc-(1-&gt;4)-Mur2Ac(oyl-L-Ala-gamma-D-Glu-L-Lys-D-Ala-D-Ala)](n)-di-trans,octa-cis-undecaprenyl diphosphate + beta-D-GlcNAc-(1-&gt;4)-Mur2Ac(oyl-L-Ala-gamma-D-Glu-L-Lys-D-Ala-D-Ala)-di-trans,octa-cis-undecaprenyl diphosphate = [GlcNAc-(1-&gt;4)-Mur2Ac(oyl-L-Ala-gamma-D-Glu-L-Lys-D-Ala-D-Ala)](n+1)-di-trans,octa-cis-undecaprenyl diphosphate + di-trans,octa-cis-undecaprenyl diphosphate + H(+). It functions in the pathway cell wall biogenesis; peptidoglycan biosynthesis. Peptidoglycan polymerase that catalyzes glycan chain elongation from lipid-linked precursors. The polypeptide is Biosynthetic peptidoglycan transglycosylase (Neisseria meningitidis serogroup C / serotype 2a (strain ATCC 700532 / DSM 15464 / FAM18)).